The chain runs to 220 residues: Flagellin A2 (220 aa).

Residues 1-11 (MFNNITDDDRG) constitute a propeptide that is removed on maturation. N-linked (GlcNAc...) asparagine glycans are attached at residues N78, N95, N112, and N124.

It belongs to the archaeal flagellin family. Glycosylated by a pentasaccharide similar to the S-layer glycoprotein, probably comprising a hexose, 2 hexuronic acids, a methyl ester of a hexuronic acid and mannose.

Its subcellular location is the archaeal flagellum. Flagellin that plays both structural and regulatory roles in flagella biosynthesis. Does not constitute a major flagellin in terms of abundance contrary to FlgA1: may regulate the flagella-dependent swimming motility depending on the relative abundance of FlgA1. Not involved in PibD-dependent surface adhesion. This chain is Flagellin A2 (flgA2), found in Haloferax volcanii (strain ATCC 29605 / DSM 3757 / JCM 8879 / NBRC 14742 / NCIMB 2012 / VKM B-1768 / DS2) (Halobacterium volcanii).